The primary structure comprises 338 residues: Phenylalanine--tRNA ligase alpha subunit (338 aa).

E253 is a Mg(2+) binding site.

It belongs to the class-II aminoacyl-tRNA synthetase family. Phe-tRNA synthetase alpha subunit type 1 subfamily. As to quaternary structure, tetramer of two alpha and two beta subunits. Mg(2+) is required as a cofactor.

Its subcellular location is the cytoplasm. It catalyses the reaction tRNA(Phe) + L-phenylalanine + ATP = L-phenylalanyl-tRNA(Phe) + AMP + diphosphate + H(+). This chain is Phenylalanine--tRNA ligase alpha subunit, found in Legionella pneumophila (strain Lens).